The primary structure comprises 160 residues: Phosphopantetheine adenylyltransferase (160 aa).

Serine 8 contributes to the substrate binding site. Residues 8–9 (SF) and histidine 16 each bind ATP. Lysine 40, threonine 72, and arginine 86 together coordinate substrate. ATP contacts are provided by residues 87–89 (GLR), glutamate 97, and 122–128 (YSFLSSS).

It belongs to the bacterial CoaD family. As to quaternary structure, homohexamer. Requires Mg(2+) as cofactor.

The protein localises to the cytoplasm. The enzyme catalyses (R)-4'-phosphopantetheine + ATP + H(+) = 3'-dephospho-CoA + diphosphate. Its pathway is cofactor biosynthesis; coenzyme A biosynthesis; CoA from (R)-pantothenate: step 4/5. Functionally, reversibly transfers an adenylyl group from ATP to 4'-phosphopantetheine, yielding dephospho-CoA (dPCoA) and pyrophosphate. The protein is Phosphopantetheine adenylyltransferase of Synechococcus sp. (strain CC9311).